The primary structure comprises 1391 residues: DNA-directed RNA polymerase subunit beta' (1391 aa).

Zn(2+) is bound by residues Cys72, Cys74, Cys87, and Cys90. The Mg(2+) site is built by Asp462, Asp464, and Asp466. Cys816, Cys890, Cys897, and Cys900 together coordinate Zn(2+).

This sequence belongs to the RNA polymerase beta' chain family. In terms of assembly, the RNAP catalytic core consists of 2 alpha, 1 beta, 1 beta' and 1 omega subunit. When a sigma factor is associated with the core the holoenzyme is formed, which can initiate transcription. The cofactor is Mg(2+). It depends on Zn(2+) as a cofactor.

It catalyses the reaction RNA(n) + a ribonucleoside 5'-triphosphate = RNA(n+1) + diphosphate. In terms of biological role, DNA-dependent RNA polymerase catalyzes the transcription of DNA into RNA using the four ribonucleoside triphosphates as substrates. The chain is DNA-directed RNA polymerase subunit beta' from Neisseria meningitidis serogroup C (strain 053442).